We begin with the raw amino-acid sequence, 406 residues long: telomere-associated protein 1 (406 aa).

Positions 20 to 40 (EHHNGSHDNDDKDKEDKEKQN) are enriched in basic and acidic residues. The segment at 20 to 46 (EHHNGSHDNDDKDKEDKEKQNTEAVAA) is disordered. The HTH myb-type domain occupies 147–206 (TTRRVRLRWTQEETADLMEGCKVHGVGNWKKILTDPRFRFNNRTAVDLKDRFRTCFPEDY). Positions 175 to 202 (WKKILTDPRFRFNNRTAVDLKDRFRTCF) form a DNA-binding region, H-T-H motif. The region spanning 234–288 (VNRKERRVFTPEEDERLLNGFMKHGPSWSNIQRDNELGLFERRSTDLRDRFRNAF) is the Myb-like domain. The disordered stretch occupies residues 368–389 (TQELQPQAHSRKQQGGDGLKEE).

Its subcellular location is the nucleus. It is found in the chromosome. It localises to the telomere. In terms of biological role, telomere-binding protein that mediates telomere clustering by promoting formation of head-to-head dimers of DNA molecules through the telomeric tracts. Binds specifically 5'-TTAGTCAGGG-3' repeats in subtelomeric regions. The polypeptide is telomere-associated protein 1 (Yarrowia lipolytica (strain CLIB 122 / E 150) (Yeast)).